The chain runs to 178 residues: Large ribosomal subunit protein uL5 (178 aa).

The protein belongs to the universal ribosomal protein uL5 family. In terms of assembly, part of the 50S ribosomal subunit; part of the 5S rRNA/L5/L18/L25 subcomplex. Contacts the 5S rRNA and the P site tRNA. Forms a bridge to the 30S subunit in the 70S ribosome.

This is one of the proteins that bind and probably mediate the attachment of the 5S RNA into the large ribosomal subunit, where it forms part of the central protuberance. In the 70S ribosome it contacts protein S13 of the 30S subunit (bridge B1b), connecting the 2 subunits; this bridge is implicated in subunit movement. Contacts the P site tRNA; the 5S rRNA and some of its associated proteins might help stabilize positioning of ribosome-bound tRNAs. The protein is Large ribosomal subunit protein uL5 of Aliivibrio fischeri (strain ATCC 700601 / ES114) (Vibrio fischeri).